The chain runs to 91 residues: uncharacterized protein (91 aa).

This is an uncharacterized protein from Escherichia coli (Bacteriophage T4).